Here is a 151-residue protein sequence, read N- to C-terminus: Large ribosomal subunit protein bL9 (151 aa).

Belongs to the bacterial ribosomal protein bL9 family.

Its function is as follows. Binds to the 23S rRNA. This Chlorobium chlorochromatii (strain CaD3) protein is Large ribosomal subunit protein bL9.